Here is a 68-residue protein sequence, read N- to C-terminus: DNA-directed RNA polymerase subunit omega (68 aa).

It belongs to the RNA polymerase subunit omega family. The RNAP catalytic core consists of 2 alpha, 1 beta, 1 beta' and 1 omega subunit. When a sigma factor is associated with the core the holoenzyme is formed, which can initiate transcription.

It catalyses the reaction RNA(n) + a ribonucleoside 5'-triphosphate = RNA(n+1) + diphosphate. Its function is as follows. Promotes RNA polymerase assembly. Latches the N- and C-terminal regions of the beta' subunit thereby facilitating its interaction with the beta and alpha subunits. In Geobacter sp. (strain M21), this protein is DNA-directed RNA polymerase subunit omega.